The following is a 141-amino-acid chain: Large ribosomal subunit protein uL11 (141 aa).

The protein belongs to the universal ribosomal protein uL11 family. As to quaternary structure, part of the ribosomal stalk of the 50S ribosomal subunit. Interacts with L10 and the large rRNA to form the base of the stalk. L10 forms an elongated spine to which L12 dimers bind in a sequential fashion forming a multimeric L10(L12)X complex. One or more lysine residues are methylated.

Functionally, forms part of the ribosomal stalk which helps the ribosome interact with GTP-bound translation factors. This Synechococcus sp. (strain JA-2-3B'a(2-13)) (Cyanobacteria bacterium Yellowstone B-Prime) protein is Large ribosomal subunit protein uL11.